A 217-amino-acid chain; its full sequence is Probable transaldolase (217 aa).

Lysine 85 (schiff-base intermediate with substrate) is an active-site residue.

Belongs to the transaldolase family. Type 3B subfamily.

The protein resides in the cytoplasm. It catalyses the reaction D-sedoheptulose 7-phosphate + D-glyceraldehyde 3-phosphate = D-erythrose 4-phosphate + beta-D-fructose 6-phosphate. The protein operates within carbohydrate degradation; pentose phosphate pathway; D-glyceraldehyde 3-phosphate and beta-D-fructose 6-phosphate from D-ribose 5-phosphate and D-xylulose 5-phosphate (non-oxidative stage): step 2/3. Transaldolase is important for the balance of metabolites in the pentose-phosphate pathway. The chain is Probable transaldolase from Lachnoclostridium phytofermentans (strain ATCC 700394 / DSM 18823 / ISDg) (Clostridium phytofermentans).